A 330-amino-acid polypeptide reads, in one-letter code: Ribosomal RNA small subunit methyltransferase H (330 aa).

Residues 40–42 (GGY), aspartate 58, phenylalanine 85, aspartate 101, and glutamine 108 contribute to the S-adenosyl-L-methionine site.

Belongs to the methyltransferase superfamily. RsmH family.

It is found in the cytoplasm. The enzyme catalyses cytidine(1402) in 16S rRNA + S-adenosyl-L-methionine = N(4)-methylcytidine(1402) in 16S rRNA + S-adenosyl-L-homocysteine + H(+). In terms of biological role, specifically methylates the N4 position of cytidine in position 1402 (C1402) of 16S rRNA. This chain is Ribosomal RNA small subunit methyltransferase H, found in Roseobacter denitrificans (strain ATCC 33942 / OCh 114) (Erythrobacter sp. (strain OCh 114)).